The chain runs to 472 residues: Inhibitor of Apoptosis OPG037 (472 aa).

6 ANK repeats span residues 97 to 126 (DGNY…DPNA), 130 to 161 (HNKT…KINN), 233 to 263 (DGNT…DVNK), 267 to 297 (FGDS…VITD), 322 to 351 (YDST…ICED), and 353 to 377 (MYYA…SVDS).

Belongs to the orthopoxvirus OPG037 protein family. May interact with host caspase-9-Apaf-1 complex.

Its subcellular location is the host cytoplasm. In terms of biological role, inhibits host apoptosis. Acts by associating with host apoptosome. This chain is Inhibitor of Apoptosis OPG037 (OPG037), found in Homo sapiens (Human).